Here is a 170-residue protein sequence, read N- to C-terminus: Lipoprotein signal peptidase (170 aa).

Transmembrane regions (helical) follow at residues 5 to 25 (VYHQ…LDQG), 70 to 90 (WFFT…ICRV), and 98 to 118 (AFAL…RIIH). Residues Asp-123 and Asp-141 contribute to the active site. Residues 137–157 (FNLADAAISLGAMVLIADLFI) traverse the membrane as a helical segment.

The protein belongs to the peptidase A8 family.

The protein localises to the cell inner membrane. It carries out the reaction Release of signal peptides from bacterial membrane prolipoproteins. Hydrolyzes -Xaa-Yaa-Zaa-|-(S,diacylglyceryl)Cys-, in which Xaa is hydrophobic (preferably Leu), and Yaa (Ala or Ser) and Zaa (Gly or Ala) have small, neutral side chains.. It functions in the pathway protein modification; lipoprotein biosynthesis (signal peptide cleavage). This protein specifically catalyzes the removal of signal peptides from prolipoproteins. This is Lipoprotein signal peptidase from Cellvibrio japonicus (strain Ueda107) (Pseudomonas fluorescens subsp. cellulosa).